Consider the following 314-residue polypeptide: 4-hydroxy-3-methylbut-2-enyl diphosphate reductase (314 aa).

Cysteine 12 contributes to the [4Fe-4S] cluster binding site. (2E)-4-hydroxy-3-methylbut-2-enyl diphosphate-binding residues include histidine 41 and histidine 74. 2 residues coordinate dimethylallyl diphosphate: histidine 41 and histidine 74. Histidine 41 and histidine 74 together coordinate isopentenyl diphosphate. Cysteine 96 contacts [4Fe-4S] cluster. Residue histidine 124 coordinates (2E)-4-hydroxy-3-methylbut-2-enyl diphosphate. Histidine 124 lines the dimethylallyl diphosphate pocket. Residue histidine 124 participates in isopentenyl diphosphate binding. Glutamate 126 serves as the catalytic Proton donor. Threonine 167 lines the (2E)-4-hydroxy-3-methylbut-2-enyl diphosphate pocket. Cysteine 197 contributes to the [4Fe-4S] cluster binding site. (2E)-4-hydroxy-3-methylbut-2-enyl diphosphate-binding residues include serine 225, serine 226, asparagine 227, and serine 269. 4 residues coordinate dimethylallyl diphosphate: serine 225, serine 226, asparagine 227, and serine 269. Isopentenyl diphosphate-binding residues include serine 225, serine 226, asparagine 227, and serine 269.

It belongs to the IspH family. [4Fe-4S] cluster serves as cofactor.

It catalyses the reaction isopentenyl diphosphate + 2 oxidized [2Fe-2S]-[ferredoxin] + H2O = (2E)-4-hydroxy-3-methylbut-2-enyl diphosphate + 2 reduced [2Fe-2S]-[ferredoxin] + 2 H(+). It carries out the reaction dimethylallyl diphosphate + 2 oxidized [2Fe-2S]-[ferredoxin] + H2O = (2E)-4-hydroxy-3-methylbut-2-enyl diphosphate + 2 reduced [2Fe-2S]-[ferredoxin] + 2 H(+). It functions in the pathway isoprenoid biosynthesis; dimethylallyl diphosphate biosynthesis; dimethylallyl diphosphate from (2E)-4-hydroxy-3-methylbutenyl diphosphate: step 1/1. Its pathway is isoprenoid biosynthesis; isopentenyl diphosphate biosynthesis via DXP pathway; isopentenyl diphosphate from 1-deoxy-D-xylulose 5-phosphate: step 6/6. Catalyzes the conversion of 1-hydroxy-2-methyl-2-(E)-butenyl 4-diphosphate (HMBPP) into a mixture of isopentenyl diphosphate (IPP) and dimethylallyl diphosphate (DMAPP). Acts in the terminal step of the DOXP/MEP pathway for isoprenoid precursor biosynthesis. This is 4-hydroxy-3-methylbut-2-enyl diphosphate reductase from Actinobacillus pleuropneumoniae serotype 3 (strain JL03).